Consider the following 250-residue polypeptide: MAGHSKWANIKRQKARVDAKKGKTFTQLSRAIIVAARHGLPDPAGNFQLRTAIEKAKAAGIPNENIERAIAKGAGTYNDGEANYEEIRYEGYGAGGVAILIEALTDNRNRTAADLRSAFSKNGGNLGETGCVSWMFSHKGVVTLTGEIDEEALLEASLIGEAEGYSAIEDSDEVEVLSAVENLEHLNQTLQDAGFTVKEAELRWFPETEMNLTDEVQIQTILKMIETIEALDDVQTVTSNLAIAPAFATL.

This sequence belongs to the TACO1 family.

Its subcellular location is the cytoplasm. This Picosynechococcus sp. (strain ATCC 27264 / PCC 7002 / PR-6) (Agmenellum quadruplicatum) protein is Probable transcriptional regulatory protein SYNPCC7002_A1640.